Reading from the N-terminus, the 400-residue chain is Protection of telomeres homolog 1 (400 aa).

Belongs to the telombin family. Expressed in sperm and oocytes.

The protein localises to the nucleus. The protein resides in the nucleus envelope. Its subcellular location is the chromosome. It is found in the telomere. Its function is as follows. Telomeric DNA-binding protein, which binds to single-stranded C-rich repeat sequences, with high specificity to the 5'-GCCTAA-3' sequence. Repeat sequence binding can be at the 5' or 3' telomeric end. May have a role in protecting the 5' end of the C-rich strand of the telomere. Acts redundantly with pot-2 to negatively regulate telomerase-mediated telomere extension. Also regulates telomere length by the telomerase-independent telomere maintenance pathway called ALT (alternative lengthening of telomeres). Through sun-1, anchors telomeres to the nuclear envelope in embryos. This Caenorhabditis elegans protein is Protection of telomeres homolog 1.